Consider the following 313-residue polypeptide: Adhesin MafA 1 (313 aa).

Positions 1 to 14 (MKILLLLIPLVLTA) are cleaved as a signal peptide. Cys15 carries N-palmitoyl cysteine lipidation. Cys15 carries S-diacylglycerol cysteine lipidation. Residues 282–298 (GDTTAQNRPDFKQNNGK) are compositionally biased toward polar residues. Residues 282–313 (GDTTAQNRPDFKQNNGKNPDVGNEVIRRRKGG) are disordered.

This sequence belongs to the MafA family.

It is found in the cell outer membrane. The polypeptide is Adhesin MafA 1 (mafA1) (Neisseria meningitidis serogroup C / serotype 2a (strain ATCC 700532 / DSM 15464 / FAM18)).